A 327-amino-acid polypeptide reads, in one-letter code: Aldo/keto reductase slr0942 (327 aa).

Glycine 18–glycine 27 is an NADP(+) binding site. Tyrosine 57 functions as the Proton donor in the catalytic mechanism. Residue histidine 119 coordinates substrate. Residue serine 216 to asparagine 280 coordinates NADP(+).

The protein belongs to the aldo/keto reductase family. In terms of assembly, monomer.

It carries out the reaction a secondary alcohol + NADP(+) = a ketone + NADPH + H(+). Curcumin non-competitively inhibits the enzyme with respect to furfural. To a lesser extent, enzyme activity is also inhibited by indomethacin, coumarate, coumarin, and alrestatin. Functionally, aldo/keto reductase with broad substrate spectrum. Catalyzes the NADPH-dependent reduction of aldehyde- and ketone-groups of different classes of carbonyl compounds to the corresponding alcohols. Highest enzymatic efficiency is observed with 4-oxonon-2-enal (4-ONE) and 4-hydroxynon-2-enal (4-HNE), that are lipid peroxidation products, and 9,10-phenanthrenequinone (9,10-PQ), a photoproduct of phenanthrene that is one of the most prevalent polycyclic aromatic hydrocarbons in the environment. Is also active on sugar-derived reactive carbonyls such as methylglyoxal (MG), glyoxal and 3-deoxyglucosone (3-DG), and on other lipid-derived carbonyls such as acrolein. May be involved in the detoxification of the toxic lipid peroxidation products 4-ONE and 4-HNE besides many other exo- and endogenic reactive carbonyl compounds (RCs) that may lead to photoinhibition or other cell damages. The sequence is that of Aldo/keto reductase slr0942 from Synechocystis sp. (strain ATCC 27184 / PCC 6803 / Kazusa).